A 490-amino-acid polypeptide reads, in one-letter code: ATP synthase subunit beta, chloroplastic (490 aa).

170–177 (GGAGVGKT) lines the ATP pocket.

The protein belongs to the ATPase alpha/beta chains family. In terms of assembly, F-type ATPases have 2 components, CF(1) - the catalytic core - and CF(0) - the membrane proton channel. CF(1) has five subunits: alpha(3), beta(3), gamma(1), delta(1), epsilon(1). CF(0) has four main subunits: a(1), b(1), b'(1) and c(9-12).

It localises to the plastid. The protein localises to the chloroplast thylakoid membrane. The catalysed reaction is ATP + H2O + 4 H(+)(in) = ADP + phosphate + 5 H(+)(out). In terms of biological role, produces ATP from ADP in the presence of a proton gradient across the membrane. The catalytic sites are hosted primarily by the beta subunits. The polypeptide is ATP synthase subunit beta, chloroplastic (Ipomoea quamoclit (Cypress vine)).